The following is a 291-amino-acid chain: Protease HtpX homolog (291 aa).

2 consecutive transmembrane segments (helical) span residues 4 to 24 (ILLF…VASL) and 39 to 59 (SALL…SLLI). Residue His144 coordinates Zn(2+). Glu145 is a catalytic residue. A Zn(2+)-binding site is contributed by His148. The next 2 membrane-spanning stretches (helical) occupy residues 159–179 (LIQG…GYAV) and 199–219 (VSTI…VAWF). Zn(2+) is bound at residue Glu224.

It belongs to the peptidase M48B family. The cofactor is Zn(2+).

The protein localises to the cell inner membrane. This Polaromonas naphthalenivorans (strain CJ2) protein is Protease HtpX homolog.